Consider the following 282-residue polypeptide: Pyridoxal 5'-phosphate synthase subunit PdxS (282 aa).

Asp-14 is a binding site for D-ribose 5-phosphate. Lys-71 serves as the catalytic Schiff-base intermediate with D-ribose 5-phosphate. Gly-143 is a D-ribose 5-phosphate binding site. Arg-155 is a D-glyceraldehyde 3-phosphate binding site. Residues Gly-204 and 225–226 (GS) each bind D-ribose 5-phosphate.

It belongs to the PdxS/SNZ family. As to quaternary structure, in the presence of PdxT, forms a dodecamer of heterodimers.

It catalyses the reaction aldehydo-D-ribose 5-phosphate + D-glyceraldehyde 3-phosphate + L-glutamine = pyridoxal 5'-phosphate + L-glutamate + phosphate + 3 H2O + H(+). It participates in cofactor biosynthesis; pyridoxal 5'-phosphate biosynthesis. Functionally, catalyzes the formation of pyridoxal 5'-phosphate from ribose 5-phosphate (RBP), glyceraldehyde 3-phosphate (G3P) and ammonia. The ammonia is provided by the PdxT subunit. Can also use ribulose 5-phosphate and dihydroxyacetone phosphate as substrates, resulting from enzyme-catalyzed isomerization of RBP and G3P, respectively. In Treponema denticola (strain ATCC 35405 / DSM 14222 / CIP 103919 / JCM 8153 / KCTC 15104), this protein is Pyridoxal 5'-phosphate synthase subunit PdxS.